A 319-amino-acid polypeptide reads, in one-letter code: 3-oxoacyl-[acyl-carrier-protein] reductase, chloroplastic (319 aa).

The transit peptide at Met-1–Lys-57 directs the protein to the chloroplast. At Ala-58 the chain carries N-acetylalanine. Residue Ile-81–Val-105 coordinates NADP(+). A substrate-binding site is contributed by Ser-213. Tyr-226 (proton acceptor) is an active-site residue.

The protein belongs to the short-chain dehydrogenases/reductases (SDR) family. As to quaternary structure, homotetramer.

It is found in the plastid. It localises to the chloroplast. The catalysed reaction is a (3R)-hydroxyacyl-[ACP] + NADP(+) = a 3-oxoacyl-[ACP] + NADPH + H(+). It participates in lipid metabolism; fatty acid biosynthesis. This is 3-oxoacyl-[acyl-carrier-protein] reductase, chloroplastic from Arabidopsis thaliana (Mouse-ear cress).